Reading from the N-terminus, the 964-residue chain is Translation initiation factor IF-2 (964 aa).

The disordered stretch occupies residues 35 to 353 (ASSTIEPPVV…RQKRNEYESM (319 aa)). Residues 64–108 (KPTPAKPAAKPGAPAPKPGTAQKPTAPTPGAVAAPKPGTAAAKPT) are compositionally biased toward low complexity. Residues 124-133 (PAKPTAPKPA) show a composition bias toward pro residues. Positions 145-155 (AAKKAAEDKAT) are enriched in basic and acidic residues. Positions 166 to 178 (NAMPRPMAKPGPK) are enriched in pro residues. The span at 220-233 (PRPQGGQRSGAPRD) shows a compositional bias: low complexity. Composition is skewed to gly residues over residues 234–252 (GQGG…GPRP) and 290–333 (GKGG…GRPG). A compositionally biased stretch (basic residues) spans 337–346 (RRGRKSKRQK). In terms of domain architecture, tr-type G spans 459–631 (KRPPVVTVMG…VCLTADAELD (173 aa)). Residues 468-475 (GHVDHGKT) form a G1 region. 468–475 (GHVDHGKT) serves as a coordination point for GTP. The interval 493–497 (GITQG) is G2. Residues 518–521 (DTPG) form a G3 region. Residues 518–522 (DTPGH) and 572–575 (NKID) each bind GTP. The G4 stretch occupies residues 572-575 (NKID). The segment at 608-610 (SAK) is G5.

It belongs to the TRAFAC class translation factor GTPase superfamily. Classic translation factor GTPase family. IF-2 subfamily.

The protein localises to the cytoplasm. In terms of biological role, one of the essential components for the initiation of protein synthesis. Protects formylmethionyl-tRNA from spontaneous hydrolysis and promotes its binding to the 30S ribosomal subunits. Also involved in the hydrolysis of GTP during the formation of the 70S ribosomal complex. The polypeptide is Translation initiation factor IF-2 (Corynebacterium efficiens (strain DSM 44549 / YS-314 / AJ 12310 / JCM 11189 / NBRC 100395)).